Reading from the N-terminus, the 244-residue chain is Serine acetyltransferase (244 aa).

Belongs to the transferase hexapeptide repeat family.

The protein localises to the cytoplasm. The enzyme catalyses L-serine + acetyl-CoA = O-acetyl-L-serine + CoA. The protein operates within amino-acid biosynthesis; L-cysteine biosynthesis; L-cysteine from L-serine: step 1/2. The polypeptide is Serine acetyltransferase (cysE) (Synechococcus elongatus (strain ATCC 33912 / PCC 7942 / FACHB-805) (Anacystis nidulans R2)).